A 141-amino-acid chain; its full sequence is Hemoglobin subunit alpha (141 aa).

Residues 1 to 141 enclose the Globin domain; that stretch reads VLSSKDKANV…VSTVLTSKYR (141 aa). Residue S3 is modified to Phosphoserine. K7 and K11 each carry N6-succinyllysine. Position 16 is an N6-acetyllysine; alternate (K16). Residue K16 is modified to N6-succinyllysine; alternate. Y24 is subject to Phosphotyrosine. An N6-succinyllysine modification is found at K40. Phosphoserine is present on S49. An O2-binding site is contributed by H58. H87 contacts heme b. At S102 the chain carries Phosphoserine. Phosphothreonine is present on T108. At S124 the chain carries Phosphoserine. T134 and T137 each carry phosphothreonine. S138 is subject to Phosphoserine.

The protein belongs to the globin family. Heterotetramer of two alpha chains and two beta chains. As to expression, red blood cells.

Functionally, involved in oxygen transport from the lung to the various peripheral tissues. Hemopressin acts as an antagonist peptide of the cannabinoid receptor CNR1. Hemopressin-binding efficiently blocks cannabinoid receptor CNR1 and subsequent signaling. The sequence is that of Hemoglobin subunit alpha (HBA) from Lama vicugna (Vicugna).